The primary structure comprises 297 residues: T-cell leukemia homeobox protein 3 (297 aa).

The interval 1-68 is disordered; that stretch reads MEPAAGAQGP…LGGPRGGAPY (68 aa). Over residues 32–52 the composition is skewed to pro residues; it reads APPPPPPPPPPPPPPPPPPRG. The segment at residues 172–231 is a DNA-binding region (homeobox); that stretch reads RKKPRTSFSRVQICELEKRFHRQKYLASAERAALAKSLKMTDAQVKTWFQNRRTKWRRQT.

In terms of tissue distribution, expression is restricted to neurons in the peripheral and central nervous system.

It is found in the nucleus. Functionally, seems to be involved in the development of cranial sensory innervation from peripheral ganglia. In Gallus gallus (Chicken), this protein is T-cell leukemia homeobox protein 3 (TLX3).